Here is a 456-residue protein sequence, read N- to C-terminus: Hydroxymethylglutaryl-CoA synthase ERG13 (456 aa).

Ala-35 is a (3S)-3-hydroxy-3-methylglutaryl-CoA binding site. The active-site Proton donor/acceptor is Glu-86. 8 residues coordinate (3S)-3-hydroxy-3-methylglutaryl-CoA: Cys-118, Asn-156, Thr-160, Ser-210, His-259, Lys-268, Asn-336, and Ser-370. Cys-118 acts as the Acyl-thioester intermediate in catalysis. Residue His-259 is the Proton donor/acceptor of the active site.

Belongs to the thiolase-like superfamily. HMG-CoA synthase family.

It catalyses the reaction acetoacetyl-CoA + acetyl-CoA + H2O = (3S)-3-hydroxy-3-methylglutaryl-CoA + CoA + H(+). It participates in metabolic intermediate biosynthesis; (R)-mevalonate biosynthesis; (R)-mevalonate from acetyl-CoA: step 2/3. Functionally, hydroxymethylglutaryl-CoA synthase; part of the first module of ergosterol biosynthesis pathway that includes the early steps of the pathway, conserved across all eukaryotes, and which results in the formation of mevalonate from acetyl-coenzyme A (acetyl-CoA). ERG13 condenses acetyl-CoA with acetoacetyl-CoA to form hydroxymethylglutaryl-CoA (HMG-CoA). The first module starts with the action of the cytosolic acetyl-CoA acetyltransferase ERG10B that catalyzes the formation of acetoacetyl-CoA. The hydroxymethylglutaryl-CoA synthases ERG13 then condenses acetyl-CoA with acetoacetyl-CoA to form HMG-CoA. The rate-limiting step of the early module is the reduction to mevalonate by the 3-hydroxy-3-methylglutaryl-coenzyme A (HMG-CoA) reductases HMG1. The chain is Hydroxymethylglutaryl-CoA synthase ERG13 from Gibberella zeae (strain ATCC MYA-4620 / CBS 123657 / FGSC 9075 / NRRL 31084 / PH-1) (Wheat head blight fungus).